We begin with the raw amino-acid sequence, 51 residues long: MVLICGNQRKKFALCPKGSLIFFKGGFKYILIWDESKIGKISSELLQFISN.

This is an uncharacterized protein from Dictyostelium discoideum (Social amoeba).